We begin with the raw amino-acid sequence, 537 residues long: Extracellular exo-inulinase (537 aa).

Residues 1-19 form the signal peptide; the sequence is MAPLSKALSVFMLMGITYA. The beta-D-fructose site is built by asparagine 40 and aspartate 41. Residue aspartate 41 is the Nucleophile of the active site. Asparagine 49 is a glycosylation site (N-linked (GlcNAc...) asparagine). Residues glutamine 57 and tryptophan 65 each coordinate beta-D-fructose. A glycan (N-linked (GlcNAc...) asparagine) is linked at asparagine 67. Serine 103 provides a ligand contact to beta-D-fructose. 2 N-linked (GlcNAc...) asparagine glycosylation sites follow: asparagine 111 and asparagine 112. Beta-D-fructose-binding residues include arginine 188, aspartate 189, and glutamate 241. The active-site Proton donor/acceptor is the glutamate 241. 2 N-linked (GlcNAc...) asparagine glycosylation sites follow: asparagine 254 and asparagine 300. A beta-D-fructose-binding site is contributed by tryptophan 335. N-linked (GlcNAc...) asparagine glycosylation is found at asparagine 398 and asparagine 430.

It belongs to the glycosyl hydrolase 32 family.

Its subcellular location is the secreted. It carries out the reaction Hydrolysis of terminal, non-reducing (2-&gt;1)- and (2-&gt;6)-linked beta-D-fructofuranose residues in fructans.. Its function is as follows. Exo-inulinase involved in utilization of the plant storage polymer inulin, consisting of fructooligosaccharides with a degree of polymerization (DP) value from 2 to 60. Splits off terminal fructose units successively from the non-reducing end of the inulin molecule, and also hydrolyzes levan, stachyose and raffinose. Hydrolyzes both beta-2,1- as well as beta-2,6-fructosyl linkages in fructooligosaccharides. The polypeptide is Extracellular exo-inulinase (Aspergillus awamori (Black koji mold)).